The sequence spans 209 residues: Shikimate kinase (209 aa).

47 to 52 (GAGKTT) lines the ATP pocket. T51 serves as a coordination point for Mg(2+). D69, R93, and G115 together coordinate substrate. Residue R153 coordinates ATP. R172 is a binding site for substrate.

The protein belongs to the shikimate kinase family. Monomer. It depends on Mg(2+) as a cofactor.

The protein localises to the cytoplasm. It catalyses the reaction shikimate + ATP = 3-phosphoshikimate + ADP + H(+). The protein operates within metabolic intermediate biosynthesis; chorismate biosynthesis; chorismate from D-erythrose 4-phosphate and phosphoenolpyruvate: step 5/7. In terms of biological role, catalyzes the specific phosphorylation of the 3-hydroxyl group of shikimic acid using ATP as a cosubstrate. This Bordetella avium (strain 197N) protein is Shikimate kinase.